The primary structure comprises 524 residues: Mitochondrial-processing peptidase subunit alpha (524 aa).

A mitochondrion-targeting transit peptide spans methionine 1–phenylalanine 32. Lysine 63 carries the post-translational modification N6-succinyllysine.

Belongs to the peptidase M16 family. In terms of assembly, heterodimer of PMPCA (alpha) and PMPCB (beta) subunits, forming the mitochondrial processing protease (MPP) in which PMPCA is involved in substrate recognition and binding and PMPCB is the catalytic subunit.

Its subcellular location is the mitochondrion matrix. It is found in the mitochondrion inner membrane. Substrate recognition and binding subunit of the essential mitochondrial processing protease (MPP), which cleaves the mitochondrial sequence off newly imported precursors proteins. The protein is Mitochondrial-processing peptidase subunit alpha (Pmpca) of Rattus norvegicus (Rat).